The primary structure comprises 663 residues: Sodium/potassium/calcium exchanger 1 (663 aa).

Residues 32-128 (SPSAIPALLT…DLFSVEERRQ (97 aa)) are Extracellular-facing. Residues asparagine 59, asparagine 66, and asparagine 100 are each glycosylated (N-linked (GlcNAc...) asparagine). A helical transmembrane segment spans residues 129–149 (GWVVLHIFGMMYVFVALAIVC). The Cytoplasmic segment spans residues 150–173 (DEYFVPALGVITEKLQISEDVAGA). Residues 170 to 210 (VAGATFMAAGGSAPELFTSLIGVFISHSNVGIGTIVGSAVF) form an Alpha-1 repeat. A helical transmembrane segment spans residues 174 to 194 (TFMAAGGSAPELFTSLIGVFI). The Extracellular segment spans residues 195 to 200 (SHSNVG). A helical transmembrane segment spans residues 201 to 221 (IGTIVGSAVFNILFVIGTCAL). The Cytoplasmic portion of the chain corresponds to 222–228 (FSREILH). The helical transmembrane segment at 229–253 (LTWWPLFRDISFYIVDLLMLILFFL) threads the bilayer. The Extracellular portion of the chain corresponds to 254-259 (DSVIDW). The helical transmembrane segment at 260–276 (WESLLLLTAYATYVFTM) threads the bilayer. At 277–471 (KHNVSLEQWV…SLEWPETRKK (195 aa)) the chain is on the cytoplasmic side. Disordered regions lie at residues 308–343 (KSSV…SLHN) and 384–465 (LTGQ…SLEW). Basic and acidic residues predominate over residues 316 to 325 (DGTKPADGKK). Composition is skewed to polar residues over residues 327-343 (QPTT…SLHN) and 399-412 (ASQN…ASDS). At serine 337 the chain carries Phosphoserine. The segment covering 413–423 (EPSKDKQKEDT) has biased composition (basic and acidic residues). The segment covering 434-461 (DNSEDSSSDSEDDSDDDSTDDEENDEPL) has biased composition (acidic residues). The chain crosses the membrane as a helical span at residues 472–492 (QAIYLFLFPIVFPLWSTIPDV). The Extracellular segment spans residues 493-499 (RNPDSKK). Residues 500–520 (FFVITFFGSIIWIAAFSYLMV) traverse the membrane as a helical segment. Over 521-535 (WWAHQVGETIGISEE) the chain is Cytoplasmic. A helical transmembrane segment spans residues 536-556 (IMGLTILAAGTSIPDLITSVI). Residues 543 to 574 (AAGTSIPDLITSVIVARKGLGDMAVSSSVGSN) form an Alpha-2 repeat. At 557 to 574 (VARKGLGDMAVSSSVGSN) the chain is on the extracellular side. The chain crosses the membrane as a helical span at residues 575 to 595 (IFDITVGLPVPWFLYSVFNGF). Over 596–604 (SPVAVSSNG) the chain is Cytoplasmic. Residues 605 to 625 (LFCAIVLLFLMLLFVIISIAL) form a helical membrane-spanning segment. The Extracellular portion of the chain corresponds to 626-632 (CKWKMNK). Residues 633 to 653 (ILGVTMFALYFVFLIISVMLE) traverse the membrane as a helical segment. Residues 654-663 (DRIISCPVSV) are Cytoplasmic-facing.

Belongs to the Ca(2+):cation antiporter (CaCA) (TC 2.A.19) family. SLC24A subfamily. Post-translationally, the uncleaved signal sequence is required for efficient membrane targeting and proper membrane integration and topology. As to expression, retinal rods. Localizes to the inner segment of rod photoreceptors.

It localises to the cell membrane. It carries out the reaction Ca(2+)(out) + K(+)(out) + 4 Na(+)(in) = Ca(2+)(in) + K(+)(in) + 4 Na(+)(out). Its function is as follows. Calcium, potassium:sodium antiporter that transports 1 Ca(2+) and 1 K(+) in exchange for 4 Na(+). Critical component of the visual transduction cascade, controlling the calcium concentration of outer segments during light and darkness. Light causes a rapid lowering of cytosolic free calcium in the outer segment of both retinal rod and cone photoreceptors and the light-induced lowering of calcium is caused by extrusion via this protein which plays a key role in the process of light adaptation. In Gallus gallus (Chicken), this protein is Sodium/potassium/calcium exchanger 1 (SLC24A1).